Consider the following 96-residue polypeptide: Progonadoliberin-1 (96 aa).

A signal peptide spans 1–26; the sequence is MHRKMAVKTLSVWLLLVGTLVPQHCC. Position 27 is a pyrrolidone carboxylic acid (Gln27). Residue Gly36 is modified to Glycine amide.

It belongs to the GnRH family. Preoptic area of the brain.

It is found in the secreted. In terms of biological role, stimulates the secretion of gonadotropins. This Verasper moseri (Barfin flounder) protein is Progonadoliberin-1 (gnrh1).